We begin with the raw amino-acid sequence, 384 residues long: Dual-specificity RNA methyltransferase RlmN (384 aa).

E105 (proton acceptor) is an active-site residue. Residues 111-350 (EDDRATLCVS…TIVRKTRGDD (240 aa)) enclose the Radical SAM core domain. C118 and C355 are disulfide-bonded. Residues C125, C129, and C132 each coordinate [4Fe-4S] cluster. S-adenosyl-L-methionine-binding positions include 179–180 (GE), S211, 233–235 (SLH), and N312. C355 serves as the catalytic S-methylcysteine intermediate.

This sequence belongs to the radical SAM superfamily. RlmN family. [4Fe-4S] cluster serves as cofactor.

The protein localises to the cytoplasm. It catalyses the reaction adenosine(2503) in 23S rRNA + 2 reduced [2Fe-2S]-[ferredoxin] + 2 S-adenosyl-L-methionine = 2-methyladenosine(2503) in 23S rRNA + 5'-deoxyadenosine + L-methionine + 2 oxidized [2Fe-2S]-[ferredoxin] + S-adenosyl-L-homocysteine. It carries out the reaction adenosine(37) in tRNA + 2 reduced [2Fe-2S]-[ferredoxin] + 2 S-adenosyl-L-methionine = 2-methyladenosine(37) in tRNA + 5'-deoxyadenosine + L-methionine + 2 oxidized [2Fe-2S]-[ferredoxin] + S-adenosyl-L-homocysteine. Its function is as follows. Specifically methylates position 2 of adenine 2503 in 23S rRNA and position 2 of adenine 37 in tRNAs. m2A2503 modification seems to play a crucial role in the proofreading step occurring at the peptidyl transferase center and thus would serve to optimize ribosomal fidelity. The sequence is that of Dual-specificity RNA methyltransferase RlmN from Shigella boydii serotype 18 (strain CDC 3083-94 / BS512).